Reading from the N-terminus, the 85-residue chain is Phosphocarrier protein HPr (85 aa).

The 85-residue stretch at 1-85 folds into the HPr domain; it reads MYSKDVEIIA…HLVALIPTLE (85 aa). H15 acts as the Pros-phosphohistidine intermediate in catalysis.

Belongs to the HPr family.

It is found in the cytoplasm. In terms of biological role, general (non sugar-specific) component of the phosphoenolpyruvate-dependent sugar phosphotransferase system (sugar PTS). This major carbohydrate active-transport system catalyzes the phosphorylation of incoming sugar substrates concomitantly with their translocation across the cell membrane. The phosphoryl group from phosphoenolpyruvate (PEP) is transferred to the phosphoryl carrier protein HPr by enzyme I. Phospho-HPr then transfers it to the PTS EIIA domain. The sequence is that of Phosphocarrier protein HPr (ptsH) from Haemophilus influenzae (strain ATCC 51907 / DSM 11121 / KW20 / Rd).